The chain runs to 421 residues: Gamma-glutamyl phosphate reductase (421 aa).

It belongs to the gamma-glutamyl phosphate reductase family.

Its subcellular location is the cytoplasm. It carries out the reaction L-glutamate 5-semialdehyde + phosphate + NADP(+) = L-glutamyl 5-phosphate + NADPH + H(+). The protein operates within amino-acid biosynthesis; L-proline biosynthesis; L-glutamate 5-semialdehyde from L-glutamate: step 2/2. Catalyzes the NADPH-dependent reduction of L-glutamate 5-phosphate into L-glutamate 5-semialdehyde and phosphate. The product spontaneously undergoes cyclization to form 1-pyrroline-5-carboxylate. The chain is Gamma-glutamyl phosphate reductase from Nocardia farcinica (strain IFM 10152).